Here is a 183-residue protein sequence, read N- to C-terminus: Adenine phosphoribosyltransferase (183 aa).

This sequence belongs to the purine/pyrimidine phosphoribosyltransferase family. In terms of assembly, homodimer.

Its subcellular location is the cytoplasm. It carries out the reaction AMP + diphosphate = 5-phospho-alpha-D-ribose 1-diphosphate + adenine. It functions in the pathway purine metabolism; AMP biosynthesis via salvage pathway; AMP from adenine: step 1/1. Catalyzes a salvage reaction resulting in the formation of AMP, that is energically less costly than de novo synthesis. This Shewanella sp. (strain MR-7) protein is Adenine phosphoribosyltransferase.